The primary structure comprises 969 residues: MSVDFVKIAEKWQKRWEEDKIFENPSKLKYTEQEKKDKFFITAAFPYLNGVLHAGHLRTFTIPEITARYQRMNNKTVLWTFGFHVSGTPIIGLAELLKKQAPETIWAYNKLHNIPMGELQTLTTPENIVNYFSKKATESFKKMGFALDWRRNFKTDDETFKKFVEWQFLKLKEKNLIVKGSHPVRYCPSCDNPVEDHDLLKGEEATLQEYILLKFKTKLNIEIDGEDKEYECIIPMATLRPETIYGVVNAWINPNDTYHIIKVYDEVQSQEEGSDEISLKYNGIWIVSKEASDKLKNQDRTVELIKEIKGEELVGKIVINPVNNKEVPLYPADFVSSEMGTGCVMSVPAHAPKDFVALRDYYSSINKELTDDELISLIKIDGYGKYPAKEIVEKMGITNQKDEKLEDATHTIYKQEFHKGILNENCGEYEGIAVRDIKDKLASDFINNNMAETLQEFSIPEVVCRCGEKCIVKTVKGQWFITYSDLEWKKKAHNWVDKMNFVPETIRMDFHNKIDWMKDKACARKKGLGTRFPFDKDWVIESLSDSTLYMAYYTVAKTINTNNILPEQLIPELFDYVYYGKGDINEISNNTKIPVELINEMRNEFEYYYPLDWRCSAKDLVPNHLTFMIFNHVALFDDEKYYPKGIVVNGYVTIEGKKLSKSKGPVLPIEEVATNYGPDVGRFYITTCAELPHDADVKFKEMEHARDNLIRFYELATELKDTEKTITELSTIDKWLLHKVHSDLKIINESYNEFQLRKIGTLFYGLTHNLKWYKRRGGNNNQLLKYVVEIWTKVLAPITPHLCEEIWEMFGYNKNNNYISNETFPQLDNSYINENCELGEEFIKNTMDDIRNIINIANIAPKTIYLYTADDWKFEVLKIMMENKGAPVNKMMPLIMKNAELRRYGKEIPKLINEIVKNGISNPIDEENILNDAKQFLENEFQCKIIVNGEDIGNKKRFAIPNKVAIYIE.

Positions 46 to 56 match the 'HIGH' region motif; that stretch reads PYLNGVLHAGH. Positions 658-662 match the 'KMSKS' region motif; the sequence is KLSKS. ATP is bound at residue Lys-661.

The protein belongs to the class-I aminoacyl-tRNA synthetase family.

The protein resides in the cytoplasm. It catalyses the reaction tRNA(Leu) + L-leucine + ATP = L-leucyl-tRNA(Leu) + AMP + diphosphate. This is Leucine--tRNA ligase from Methanococcus aeolicus (strain ATCC BAA-1280 / DSM 17508 / OCM 812 / Nankai-3).